Here is a 305-residue protein sequence, read N- to C-terminus: MAQVKRIRRNVSGIILLDKPLGFTSNAALQKVRWLLNAEKAGHTGSLDPLATGVLPLCFGEATKFSQYLLDSDKGYETLAQLGKTTTTADAEGEVLQTREVTVGRADIEAVLPEFRGEIKQIPPMYSALKRDGQPLYKLARAGEVVEREPRSVTIARLELLAFEGDTARLAVDCSKGTYIRTLVEDIGEKLGCGAYVAELRRTQAGPFSLAQTVTLEELEAVHAEGGNEAVDRFLMPSDSGLLDWPLLQFSEHSAFYWLNGQPVRAPDAPKFGMVRVQDHNGRFIGIGEVSEDGRIAPRRLIRSE.

Asp48 serves as the catalytic Nucleophile.

The protein belongs to the pseudouridine synthase TruB family. Type 1 subfamily.

The catalysed reaction is uridine(55) in tRNA = pseudouridine(55) in tRNA. Its function is as follows. Responsible for synthesis of pseudouridine from uracil-55 in the psi GC loop of transfer RNAs. This chain is tRNA pseudouridine synthase B, found in Pseudomonas fluorescens (strain ATCC BAA-477 / NRRL B-23932 / Pf-5).